The following is a 266-amino-acid chain: MMASRVMASSSPSHTASDLARFAAGRGGGGSAGLGSMNVEEILRGIYADMPTPALPLVGGDRPMSPLPAPDVAAAPRTAEEVWKEITGAGVAAAAGGVVPPAAAAAAAPAVVAGAGAGTGAEMTLEDFLAREGAVKEDEAVVTDPSAAKGQVVMGFLNGAEVTGGVTGGRSRKRHLMDPMDRAAMQRQKRMIKNRESAARSRERKQAYIAELESLVTQLEEENAKMFKEQEEQHQKRLKELKEMVVPVIIRKTSARDLRRTNSMEW.

The bZIP domain occupies 184–248 (AMQRQKRMIK…KELKEMVVPV (65 aa)). A basic motif region spans residues 187–205 (RQKRMIKNRESAARSRERK). Positions 202 to 244 (RERKQAYIAELESLVTQLEEENAKMFKEQEEQHQKRLKELKEM) form a coiled coil. The tract at residues 212 to 219 (LESLVTQL) is leucine-zipper.

It localises to the nucleus. Functionally, transcription activator that binds to the ABA-responsive elements (ABREs) in vitro. Involved in abiotic stress responses and abscisic acid (ABA) signaling. Involved in the signaling pathway that induces growth inhibition in response to D-allose. The protein is bZIP transcription factor 12 of Oryza sativa subsp. japonica (Rice).